Reading from the N-terminus, the 194-residue chain is E3 ubiquitin-protein ligase RNF4 (194 aa).

Basic residues predominate over residues 1–12; the sequence is MSTRNPQRKRRG. The required for ubiquitination activity stretch occupies residues 1–20; that stretch reads MSTRNPQRKRRGGAVNSRQT. Residues 1–36 form a disordered region; the sequence is MSTRNPQRKRRGGAVNSRQTQKRTRETTSTPEISLE. The mediates interaction with TRPS1 stretch occupies residues 6 to 65; it reads PQRKRRGGAVNSRQTQKRTRETTSTPEISLEAEPIELVETVGDEIVDLTCESLEPVVVDL. Short sequence motifs (SUMO interaction motif) lie at residues 40–43, 50–53, 61–63, and 71–74; these read IELV, IVDL, VVV, and VVIV. Phosphoserine occurs at positions 98 and 99. Residues C136, C139, C158, H160, C163, C166, C177, and C180 each coordinate Zn(2+). The segment at 136-181 adopts an RING-type zinc-finger fold; sequence CPICMDGYSEIVQNGRLIVSTECGHVFCSQCLRDSLKNANTCPTCR.

As to quaternary structure, homodimer (via RING-type zinc finger domain). Interacts with GSC2. Interacts with AR/the androgen receptor and TBP. Interacts with TCF20. Interacts with PATZ1. Interacts with TRPS1; negatively regulates TRPS1 transcriptional repressor activity. Interacts with PML (isoform PML-1, isoform PML-2, isoform PML-3, isoform PML-4, isoform PML-5 and isoform PML-6). Interacts with PRDM1/Blimp-1. Sumoylated; conjugated by one or two SUMO1 moieties. Post-translationally, autoubiquitinated. As to expression, widely expressed with highest levels in testis.

It is found in the cytoplasm. Its subcellular location is the nucleus. It localises to the nucleoplasm. The protein resides in the PML body. The catalysed reaction is S-ubiquitinyl-[E2 ubiquitin-conjugating enzyme]-L-cysteine + [acceptor protein]-L-lysine = [E2 ubiquitin-conjugating enzyme]-L-cysteine + N(6)-ubiquitinyl-[acceptor protein]-L-lysine.. Its pathway is protein modification; protein ubiquitination. In terms of biological role, E3 ubiquitin-protein ligase which binds polysumoylated chains covalently attached to proteins and mediates 'Lys-6'-, 'Lys-11'-, 'Lys-48'- and 'Lys-63'-linked polyubiquitination of those substrates and their subsequent targeting to the proteasome for degradation. Regulates the degradation of several proteins including PML and the transcriptional activator PEA3. Involved in chromosome alignment and spindle assembly, it regulates the kinetochore CENPH-CENPI-CENPK complex by targeting polysumoylated CENPI to proteasomal degradation. Regulates the cellular responses to hypoxia and heat shock through degradation of respectively EPAS1 and PARP1. Alternatively, it may also bind DNA/nucleosomes and have a more direct role in the regulation of transcription for instance enhancing basal transcription and steroid receptor-mediated transcriptional activation. Catalyzes ubiquitination of sumoylated PARP1 in response to PARP1 trapping to chromatin, leading to PARP1 removal from chromatin by VCP/p97. The polypeptide is E3 ubiquitin-protein ligase RNF4 (Rattus norvegicus (Rat)).